Reading from the N-terminus, the 213-residue chain is GTP-binding protein yptV4 (213 aa).

13–21 (GDTGVGKSC) lines the GTP pocket. The Effector region motif lies at 35 to 43 (HDLTIGVEF). Residues 61-65 (DTAGQ), 119-122 (NKCD), and 149-151 (SAR) contribute to the GTP site. The segment at 194-213 (AGPQAAKPGEGDARKSSSCC) is disordered. A compositionally biased stretch (basic and acidic residues) spans 202–213 (GEGDARKSSSCC). Residues Cys-212 and Cys-213 are each lipidated (S-geranylgeranyl cysteine).

It belongs to the small GTPase superfamily. Rab family.

It localises to the cell membrane. Its function is as follows. Protein transport. Probably involved in vesicular traffic. The polypeptide is GTP-binding protein yptV4 (YPTV4) (Volvox carteri (Green alga)).